We begin with the raw amino-acid sequence, 336 residues long: Fructose-1,6-bisphosphatase class 1 (336 aa).

Residues Glu90, Asp112, Leu114, and Asp115 each coordinate Mg(2+). Substrate is bound by residues 115–118 (DGSS), Asn207, and Lys273. Glu279 serves as a coordination point for Mg(2+).

The protein belongs to the FBPase class 1 family. As to quaternary structure, homotetramer. It depends on Mg(2+) as a cofactor.

The protein resides in the cytoplasm. The enzyme catalyses beta-D-fructose 1,6-bisphosphate + H2O = beta-D-fructose 6-phosphate + phosphate. Its pathway is carbohydrate biosynthesis; gluconeogenesis. In Xanthomonas oryzae pv. oryzae (strain PXO99A), this protein is Fructose-1,6-bisphosphatase class 1.